A 164-amino-acid polypeptide reads, in one-letter code: Small ribosomal subunit protein uS9 (164 aa).

It belongs to the universal ribosomal protein uS9 family.

The protein is Small ribosomal subunit protein uS9 of Rickettsia bellii (strain OSU 85-389).